The chain runs to 460 residues: Glucan endo-1,3-beta-D-glucosidase (460 aa).

A signal peptide spans 1-26; the sequence is MAANVQTSSLLFLVFLLLQNFYSANS. The active-site Proton donor is the Glu123. Glu268 serves as the catalytic Nucleophile. The disordered stretch occupies residues 352-371; it reads NTQNPTTPATPTPTPKAAGS. Asn355 carries N-linked (GlcNAc...) asparagine glycosylation. Cysteines 373 and 435 form a disulfide. The N-linked (GlcNAc...) asparagine glycan is linked to Asn447.

It belongs to the glycosyl hydrolase 17 family. In terms of assembly, homodimer. Post-translationally, glycosylated. Contains two additional disulfide bonds, but it is unclear if they are between the pairs Cys-392-Cys-398 and Cys-407-Cys-453 (PudMed:18096638) or between the pairs Cys-392-Cys-453 and Cys-398-Cys-407 (PudMed:12392450). In terms of tissue distribution, expressed only in pollen.

It localises to the secreted. It catalyses the reaction Hydrolysis of (1-&gt;3)-beta-D-glucosidic linkages in (1-&gt;3)-beta-D-glucans.. The sequence is that of Glucan endo-1,3-beta-D-glucosidase (OLE9) from Olea europaea (Common olive).